The primary structure comprises 1431 residues: 1-phosphatidylinositol 4,5-bisphosphate phosphodiesterase beta egl-8 (1431 aa).

The PI-PLC X-box domain maps to 340-491 (MDMDQPLCHY…LRKKILIKNK (152 aa)). Residue histidine 355 is part of the active site. Residues asparagine 356, glutamate 385, and aspartate 387 each coordinate Ca(2+). Residue histidine 403 is part of the active site. Residue glutamate 437 participates in Ca(2+) binding. 2 residues coordinate substrate: lysine 489 and lysine 491. Disordered regions lie at residues 510-601 (KLDE…MVPD) and 632-692 (RRQS…SGPS). Over residues 543–556 (EEVDDDTSDDDDDP) the composition is skewed to acidic residues. Composition is skewed to low complexity over residues 572–586 (NTTS…ARSS), 652–661 (SSSSPATPSI), and 668–692 (ATSS…SGPS). A PI-PLC Y-box domain is found at 758–874 (LSSLVNYTHP…GYLLKPDFLR (117 aa)). Residues serine 787 and arginine 814 each contribute to the substrate site. The C2 domain maps to 877 to 1002 (DRTFDPFSES…SLRSDTNQSF (126 aa)). Disordered regions lie at residues 1072 to 1119 (QPPR…VAVD), 1150 to 1176 (DLRK…SSIA), and 1188 to 1216 (NNRR…SASG). Polar residues predominate over residues 1074-1113 (PRQNGSSADLLANNGQTGSARGDQTSSMASSTIRSPNEQP). Residues 1135–1166 (KAFAKLLKRFQKELDDLRKKHQKQRDSIQKQQ) are a coiled coil. Positions 1150-1162 (DLRKKHQKQRDSI) are enriched in basic and acidic residues. A compositionally biased stretch (basic residues) spans 1191–1200 (RSTKKEKGSR). A compositionally biased stretch (low complexity) spans 1204-1216 (TASVSSGCGSASG). Coiled-coil stretches lie at residues 1288–1318 (DEEE…KNQM) and 1368–1402 (EKNL…QLEQ).

Ca(2+) is required as a cofactor. Expressed in most or all neurons with high expression in the head and tail ganglia and low expression in the motor neurons of the ventral cord. Expressed in the intestine (at protein level). In males, expressed in vas deferens, spicule protractor muscles, diagonal muscles and a male-specific neuron.

Its subcellular location is the perikaryon. The protein localises to the cell projection. It localises to the axon. The protein resides in the synapse. It is found in the cell junction. Its subcellular location is the adherens junction. It carries out the reaction a 1,2-diacyl-sn-glycero-3-phospho-(1D-myo-inositol-4,5-bisphosphate) + H2O = 1D-myo-inositol 1,4,5-trisphosphate + a 1,2-diacyl-sn-glycerol + H(+). In terms of biological role, mediates the production of the second messenger molecules diacylglycerol (DAG) and inositol 1,4,5-trisphosphate (IP3) which plays an important role in the regulation of intracellular signaling cascades. Required in the nervous system to modulate neuronal activity. Facilitates synaptic transmission at neuromuscular junctions by regulating the release of acetylcholine from the motor neurons and thus affecting locomotion. Plays a role in efficient egg laying and defecation. Involved in axon regeneration after injury. Plays a role in male mating behavior by regulating spicule insertion and sperm transfer. By triggering Ca(2+) transient via IP3-mediated activation of IPR3 receptor itr-1 in ASH sensory neurons, regulates avoidance behavior in response to nose touch. By activating tpa-1 via DAG production, required for the expression of antimicrobial peptide nlp-29 in response to fungal infection. During embryogenesis, may play a role in epidermal morphogenesis together with plc-1. The protein is 1-phosphatidylinositol 4,5-bisphosphate phosphodiesterase beta egl-8 of Caenorhabditis elegans.